A 464-amino-acid chain; its full sequence is Soluble pyridine nucleotide transhydrogenase (464 aa).

35 to 44 serves as a coordination point for FAD; sequence DDRRQVGGNC.

This sequence belongs to the class-I pyridine nucleotide-disulfide oxidoreductase family. FAD serves as cofactor.

The protein localises to the cytoplasm. The enzyme catalyses NAD(+) + NADPH = NADH + NADP(+). Functionally, conversion of NADPH, generated by peripheral catabolic pathways, to NADH, which can enter the respiratory chain for energy generation. This Pseudomonas putida (strain ATCC 47054 / DSM 6125 / CFBP 8728 / NCIMB 11950 / KT2440) protein is Soluble pyridine nucleotide transhydrogenase.